The sequence spans 155 residues: Protein SREK1IP1 (155 aa).

The CCHC-type zinc-finger motif lies at 13–30 (AGCKKCGYPGHLTFECRN). A disordered region spans residues 43-155 (DVSSTSTEDS…SSSSQSSSSD (113 aa)). Basic and acidic residues predominate over residues 58–74 (EVARAPADKKNVTDTGK). The span at 75 to 93 (KKLKRKKEKKLKKHRKRLH) shows a compositional bias: basic residues. The span at 94 to 103 (SSSESDDNSK) shows a compositional bias: basic and acidic residues. Over residues 104 to 137 (AKKRKSQKKEKRVKHKAKKGKQHKKDKRKEKRER) the composition is skewed to basic residues. Residues 140-155 (SSSSSSSSSSQSSSSD) are compositionally biased toward low complexity.

Possible splicing regulator involved in the control of cellular survival. This is Protein SREK1IP1 (srek1ip1) from Xenopus tropicalis (Western clawed frog).